Reading from the N-terminus, the 191-residue chain is UPF0312 protein PSPA7_0523 (191 aa).

A signal peptide spans 1-23 (MLKKTLAALALGSALFTAGQAMA).

Belongs to the UPF0312 family. Type 1 subfamily.

The protein localises to the periplasm. This Pseudomonas paraeruginosa (strain DSM 24068 / PA7) (Pseudomonas aeruginosa (strain PA7)) protein is UPF0312 protein PSPA7_0523.